A 292-amino-acid chain; its full sequence is Calponin-1 (292 aa).

The 104-residue stretch at 28 to 131 (PQTERQLRVW…STLIALASQA (104 aa)) folds into the Calponin-homology (CH) domain. Calponin-like repeat units follow at residues 164–189 (IGLQMGTNKFASQQGMTAYGTRRHLY), 204–229 (ISLQMGTNKGASQAGMTAPGTKRQIF), and 243–268 (IGLQMGSNKGASQQGMTVYGLPRQVY). Phosphothreonine; by ROCK2 is present on Thr-170. Ser-175 bears the Phosphoserine; by PKC, CaMK2 and ROCK2 mark. Phosphothreonine; by ROCK2 is present on residues Thr-180 and Thr-184. Thr-184 is modified (phosphothreonine; by PKC and CaMK2). Residues 185-193 (RRHLYDPKL) are calmodulin-binding. Thr-259 is subject to Phosphothreonine; by ROCK2.

The protein belongs to the calponin family. Phosphorylation by PKC or CaM kinase II reduces the binding of calponin to F-actin and tropomyosin. As to expression, smooth muscle, and tissues containing significant amounts of smooth muscle.

Functionally, thin filament-associated protein that is implicated in the regulation and modulation of smooth muscle contraction. It is capable of binding to actin, calmodulin and tropomyosin. The interaction of calponin with actin inhibits the actomyosin Mg-ATPase activity. The polypeptide is Calponin-1 (CNN1) (Gallus gallus (Chicken)).